The primary structure comprises 697 residues: Probable glutamine--tRNA ligase (697 aa).

Positions 204–214 match the 'HIGH' region motif; it reads PEPNGILHIGH. ATP-binding positions include 205 to 207 and 211 to 217; these read EPN and HIGHAKA. Residues Asp-237 and Tyr-386 each contribute to the L-glutamine site. ATP-binding positions include Thr-405, 434–435, and 442–444; these read RL and LSK. The 'KMSKS' region motif lies at 441–445; that stretch reads VLSKR.

Belongs to the class-I aminoacyl-tRNA synthetase family.

The catalysed reaction is tRNA(Gln) + L-glutamine + ATP = L-glutaminyl-tRNA(Gln) + AMP + diphosphate. The polypeptide is Probable glutamine--tRNA ligase (Encephalitozoon cuniculi (strain GB-M1) (Microsporidian parasite)).